A 521-amino-acid polypeptide reads, in one-letter code: MFS siderochrome iron transporter 1 (521 aa).

Polar residues predominate over residues Met1–Gln10. Residues Met1 to Pro29 form a disordered region. Residues Asp11 to Pro29 show a composition bias toward basic and acidic residues. 5 helical membrane passes run Trp62–Gly82, Phe99–Cys119, Trp126–Gln146, Phe148–Val168, and Ile187–Ile207. N-linked (GlcNAc...) asparagine glycosylation is present at Asn209. 6 consecutive transmembrane segments (helical) span residues Tyr229–Phe249, Leu330–Leu350, Val379–Pro399, Lys404–Ala424, Leu431–Ile451, and Gly466–Ala486. N-linked (GlcNAc...) asparagine glycosylation occurs at Asn487. The chain crosses the membrane as a helical span at residues Ala491 to Leu511.

It belongs to the major facilitator superfamily.

Its subcellular location is the membrane. Functionally, major facilitator transporter probably involved in siderophore basidioferrin transmembrane transport. This Ceriporiopsis subvermispora (strain B) (White-rot fungus) protein is MFS siderochrome iron transporter 1.